Consider the following 427-residue polypeptide: Enolase (427 aa).

Glutamine 163 is a (2R)-2-phosphoglycerate binding site. Residue glutamate 205 is the Proton donor of the active site. The Mg(2+) site is built by aspartate 242, glutamate 285, and aspartate 312. (2R)-2-phosphoglycerate-binding residues include lysine 337, arginine 366, serine 367, and lysine 388. The Proton acceptor role is filled by lysine 337.

This sequence belongs to the enolase family. The cofactor is Mg(2+).

Its subcellular location is the cytoplasm. It is found in the secreted. The protein localises to the cell surface. It carries out the reaction (2R)-2-phosphoglycerate = phosphoenolpyruvate + H2O. It functions in the pathway carbohydrate degradation; glycolysis; pyruvate from D-glyceraldehyde 3-phosphate: step 4/5. Its function is as follows. Catalyzes the reversible conversion of 2-phosphoglycerate (2-PG) into phosphoenolpyruvate (PEP). It is essential for the degradation of carbohydrates via glycolysis. This Herminiimonas arsenicoxydans protein is Enolase.